The sequence spans 391 residues: Heme A synthase (391 aa).

The next 8 helical transmembrane spans lie at 37-57 (IRLW…VGGL), 121-141 (RQLG…FLAA), 152-172 (LLAL…MVAS), 186-206 (LATH…QALL), 229-249 (TTVL…VAGI), 298-318 (FLHR…WIFG), 332-352 (LLAM…LSAA), and 354-374 (WQVA…ILHA). Histidine 300 is a binding site for heme. A heme-binding site is contributed by histidine 360.

Belongs to the COX15/CtaA family. Type 2 subfamily. As to quaternary structure, interacts with CtaB. Heme b serves as cofactor.

Its subcellular location is the cell membrane. It carries out the reaction Fe(II)-heme o + 2 A + H2O = Fe(II)-heme a + 2 AH2. It functions in the pathway porphyrin-containing compound metabolism; heme A biosynthesis; heme A from heme O: step 1/1. In terms of biological role, catalyzes the conversion of heme O to heme A by two successive hydroxylations of the methyl group at C8. The first hydroxylation forms heme I, the second hydroxylation results in an unstable dihydroxymethyl group, which spontaneously dehydrates, resulting in the formyl group of heme A. This chain is Heme A synthase, found in Cereibacter sphaeroides (strain ATCC 17029 / ATH 2.4.9) (Rhodobacter sphaeroides).